The chain runs to 467 residues: Chromosomal replication initiator protein DnaA (467 aa).

The domain I, interacts with DnaA modulators stretch occupies residues 1-90 (MSLSLWQQCL…KPVTQTPQAA (90 aa)). A domain II region spans residues 91 to 130 (VTSNVAAPAQVAQTQPQRAAPSMRSGWDNVPAPAEPTYRS). The tract at residues 131 to 347 (NVNVKHTFDN…GALNRVIANA (217 aa)) is domain III, AAA+ region. Residues glycine 175, glycine 177, lysine 178, and threonine 179 each coordinate ATP. Positions 348–467 (NFTGRAITID…FSNLIRTLSS (120 aa)) are domain IV, binds dsDNA.

It belongs to the DnaA family. In terms of assembly, oligomerizes as a right-handed, spiral filament on DNA at oriC.

The protein resides in the cytoplasm. Functionally, plays an essential role in the initiation and regulation of chromosomal replication. ATP-DnaA binds to the origin of replication (oriC) to initiate formation of the DNA replication initiation complex once per cell cycle. Binds the DnaA box (a 9 base pair repeat at the origin) and separates the double-stranded (ds)DNA. Forms a right-handed helical filament on oriC DNA; dsDNA binds to the exterior of the filament while single-stranded (ss)DNA is stabiized in the filament's interior. The ATP-DnaA-oriC complex binds and stabilizes one strand of the AT-rich DNA unwinding element (DUE), permitting loading of DNA polymerase. After initiation quickly degrades to an ADP-DnaA complex that is not apt for DNA replication. Binds acidic phospholipids. The sequence is that of Chromosomal replication initiator protein DnaA from Escherichia coli (strain ATCC 8739 / DSM 1576 / NBRC 3972 / NCIMB 8545 / WDCM 00012 / Crooks).